The sequence spans 426 residues: Serine protease HTRA2, mitochondrial (426 aa).

A mitochondrion-targeting transit peptide spans 1 to 30 (MALRGSHRLDDFIRRCSALTLFHSQAPSRR). Positions 30–59 (RVSHCGRDRRQQQDPPGQGRQEQQESGGGH) are disordered. Residues 31–78 (VSHCGRDRRQQQDPPGQGRQEQQESGGGHWSRFGWRSLIRFFVPFSLG) constitute a propeptide that is removed on maturation. A compositionally biased stretch (low complexity) spans 42-54 (QDPPGQGRQEQQE). Residues 68 to 86 (LIRFFVPFSLGAVASSLVI) form a helical membrane-spanning segment. The IAP-binding signature appears at 79–82 (AVAS). The segment at 143–306 (SNGSGFIIEQ…IPIDYVKVFL (164 aa)) is serine protease. Catalysis depends on charge relay system residues His161, Asp193, and Ser270. Positions 329 to 414 (MGITMLTLTP…HLDIVILRGV (86 aa)) constitute a PDZ domain.

It belongs to the peptidase S1C family. Interacts with th/DIAP1 (via BIR 2 domain).

The protein resides in the mitochondrion intermembrane space. The protein localises to the mitochondrion membrane. It carries out the reaction Cleavage of non-polar aliphatic amino-acids at the P1 position, with a preference for Val, Ile and Met. At the P2 and P3 positions, Arg is selected most strongly with a secondary preference for other hydrophilic residues.. Serine protease that shows proteolytic activity against a non-specific substrate beta-casein. Promotes or induces cell death either by direct binding to and inhibition of BIRC proteins (also called inhibitor of apoptosis proteins, IAPs), leading to an increase in caspase activity, or by a BIRC inhibition-independent, caspase-independent and serine protease activity-dependent mechanism. Can antagonize antiapoptotic activity of th/Diap1 by directly inducing the degradation of th/Diap1. In Drosophila ananassae (Fruit fly), this protein is Serine protease HTRA2, mitochondrial.